The following is a 323-amino-acid chain: Methionyl-tRNA formyltransferase (323 aa).

Position 117 to 120 (117 to 120 (SLLP)) interacts with (6S)-5,6,7,8-tetrahydrofolate.

This sequence belongs to the Fmt family.

It carries out the reaction L-methionyl-tRNA(fMet) + (6R)-10-formyltetrahydrofolate = N-formyl-L-methionyl-tRNA(fMet) + (6S)-5,6,7,8-tetrahydrofolate + H(+). Its function is as follows. Attaches a formyl group to the free amino group of methionyl-tRNA(fMet). The formyl group appears to play a dual role in the initiator identity of N-formylmethionyl-tRNA by promoting its recognition by IF2 and preventing the misappropriation of this tRNA by the elongation apparatus. The sequence is that of Methionyl-tRNA formyltransferase from Acidovorax ebreus (strain TPSY) (Diaphorobacter sp. (strain TPSY)).